The following is a 153-amino-acid chain: Arginine repressor (153 aa).

It belongs to the ArgR family.

The protein resides in the cytoplasm. It participates in amino-acid biosynthesis; L-arginine biosynthesis [regulation]. Regulates arginine biosynthesis genes. The sequence is that of Arginine repressor from Actinobacillus pleuropneumoniae serotype 3 (strain JL03).